A 761-amino-acid chain; its full sequence is uncharacterized protein (761 aa).

TPR repeat units follow at residues 35–68 (EEGK…SLNS), 69–102 (AQGL…SDVD), 103–136 (DALY…NPNK), 137–170 (VEIL…KPDF), 172–203 (EAEE…KNPN), 204–237 (EEVY…FPHD), 351–384 (LGVL…NPSA), and 419–452 (ASAG…VKEE). The protein sulfotransferase-like stretch occupies residues 487–761 (KRPIFVLGMP…PKGLVGYTVG (275 aa)).

In the C-terminal section; belongs to the protein sulfotransferase family.

This is an uncharacterized protein from Aquifex aeolicus (strain VF5).